Consider the following 382-residue polypeptide: V-set and immunoglobulin domain-containing protein 1 (382 aa).

An N-terminal signal peptide occupies residues 1 to 21 (MGLTFWKVFLILNCLAGQVNG). The Ig-like V-type domain maps to 22 to 133 (VQVTIPDSFV…FFGKNQGTIS (112 aa)). The Extracellular portion of the chain corresponds to 22–234 (VQVTIPDSFV…DLTTPYPGIG (213 aa)). Residue asparagine 32 is glycosylated (N-linked (GlcNAc...) asparagine). Cystine bridges form between cysteine 43–cysteine 116 and cysteine 161–cysteine 211. One can recognise an Ig-like C2-type domain in the interval 140–227 (PSKPFCSIQG…GNSSCEIDLT (88 aa)). N-linked (GlcNAc...) asparagine glycosylation is found at asparagine 200 and asparagine 219. A helical membrane pass occupies residues 235-255 (IIVGAFVGTLIGVIIIISVVW). Residues 256 to 382 (FVRRKVKAKG…FCDEEKVIKP (127 aa)) are Cytoplasmic-facing. Residues 266 to 382 (KERKRNSKTT…FCDEEKVIKP (117 aa)) form a disordered region. Positions 273–285 (KTTTELEPMTKIN) are enriched in polar residues. A compositionally biased stretch (basic and acidic residues) spans 286–298 (QRTEGETMPREDA). Positions 327 to 341 (EPEPALQPTVEPPSG) are enriched in pro residues.

The protein localises to the membrane. This Bos taurus (Bovine) protein is V-set and immunoglobulin domain-containing protein 1 (VSIG1).